We begin with the raw amino-acid sequence, 137 residues long: NADPH-dependent 7-cyano-7-deazaguanine reductase (137 aa).

The Thioimide intermediate role is filled by C50. The active-site Proton donor is D57. Substrate is bound by residues 72 to 74 (VEL) and 91 to 92 (HE).

It belongs to the GTP cyclohydrolase I family. QueF type 1 subfamily.

Its subcellular location is the cytoplasm. It carries out the reaction 7-aminomethyl-7-carbaguanine + 2 NADP(+) = 7-cyano-7-deazaguanine + 2 NADPH + 3 H(+). It functions in the pathway tRNA modification; tRNA-queuosine biosynthesis. Functionally, catalyzes the NADPH-dependent reduction of 7-cyano-7-deazaguanine (preQ0) to 7-aminomethyl-7-deazaguanine (preQ1). This chain is NADPH-dependent 7-cyano-7-deazaguanine reductase, found in Synechococcus sp. (strain CC9902).